Reading from the N-terminus, the 303-residue chain is Probable cell division protein WhiA (303 aa).

Positions 272-303 form a DNA-binding region, H-T-H motif; the sequence is SIQQVADALEFPITKSGVNHRLRKINKIADDL.

The protein belongs to the WhiA family.

Its function is as follows. Involved in cell division and chromosome segregation. This is Probable cell division protein WhiA from Streptococcus pyogenes serotype M3 (strain ATCC BAA-595 / MGAS315).